Reading from the N-terminus, the 240-residue chain is uncharacterized protein (240 aa).

The protein to H.influenzae HI_0575.

This is an uncharacterized protein from Escherichia coli (strain K12).